The chain runs to 388 residues: Succinate--CoA ligase [ADP-forming] subunit beta (388 aa).

The 236-residue stretch at lysine 9–histidine 244 folds into the ATP-grasp domain. ATP-binding positions include lysine 46, glycine 53–glycine 55, glutamate 99, threonine 102, and glutamate 107. Positions 199 and 213 each coordinate Mg(2+). Residues asparagine 264 and glycine 321–valine 323 contribute to the substrate site.

The protein belongs to the succinate/malate CoA ligase beta subunit family. In terms of assembly, heterotetramer of two alpha and two beta subunits. Mg(2+) serves as cofactor.

It catalyses the reaction succinate + ATP + CoA = succinyl-CoA + ADP + phosphate. The catalysed reaction is GTP + succinate + CoA = succinyl-CoA + GDP + phosphate. It participates in carbohydrate metabolism; tricarboxylic acid cycle; succinate from succinyl-CoA (ligase route): step 1/1. Succinyl-CoA synthetase functions in the citric acid cycle (TCA), coupling the hydrolysis of succinyl-CoA to the synthesis of either ATP or GTP and thus represents the only step of substrate-level phosphorylation in the TCA. The beta subunit provides nucleotide specificity of the enzyme and binds the substrate succinate, while the binding sites for coenzyme A and phosphate are found in the alpha subunit. The polypeptide is Succinate--CoA ligase [ADP-forming] subunit beta (Pseudomonas entomophila (strain L48)).